Here is a 161-residue protein sequence, read N- to C-terminus: Troponin C, slow skeletal and cardiac muscles (161 aa).

Met1 bears the N-acetylmethionine mark. EF-hand domains lie at 16–51 (QKNE…LGQN), 52–87 (PTPE…CMKD), 92–127 (KSEE…TGET), and 128–161 (ITED…KGVE). Ca(2+) is bound by residues Asp65, Asp67, Ser69, Thr71, and Glu76. Residue Ser98 is modified to Phosphoserine. Positions 105, 107, 109, 111, 116, 141, 143, 145, 147, and 152 each coordinate Ca(2+).

The protein belongs to the troponin C family.

Functionally, troponin is the central regulatory protein of striated muscle contraction. Tn consists of three components: Tn-I which is the inhibitor of actomyosin ATPase, Tn-T which contains the binding site for tropomyosin and Tn-C. The binding of calcium to Tn-C abolishes the inhibitory action of Tn on actin filaments. The polypeptide is Troponin C, slow skeletal and cardiac muscles (TNNC1) (Bos taurus (Bovine)).